The following is a 203-amino-acid chain: MAEGQVLVLDGRGHLLGRLAAIVAKQVLLGRKVVVVRCEGINISGNFYRNKLKYLAFLRKRMNTNPSRGPYHFRAPSRIFWRTVRGMLPHKTKRGQAALERLKVLDGIPPPYDKKKRMVVPAALKVVRLKPTRKFAYLGRLAHEVGWKYQAVTATLEEKRKEKAKMHYRKKKQILRLRKQAEKNVEKKICKFTEVLKTNGLLV.

Alanine 2 is modified (N-acetylalanine). Arginine 59 bears the Citrulline mark. Serine 77 carries the phosphoserine; by ZIPK/DAPK3 modification. At arginine 140 the chain carries Citrulline. Residue lysine 191 is modified to N6-acetyllysine.

Belongs to the universal ribosomal protein uL13 family. Component of the 60S ribosome. Component of the GAIT complex. Interacts with EIF4G1. In terms of processing, phosphorylation at Ser-77 upon interferon-gamma treatment in macrophages involves a DAPK1-DAPK3 kinase cascade and is causing release from the ribosome, association with the GAIT complex and subsequent involvement in transcript-selective translation inhibition. Citrullinated by PADI4.

Its subcellular location is the cytoplasm. Its function is as follows. Associated with ribosomes but is not required for canonical ribosome function and has extra-ribosomal functions. Component of the GAIT (gamma interferon-activated inhibitor of translation) complex which mediates interferon-gamma-induced transcript-selective translation inhibition in inflammation processes. Upon interferon-gamma activation and subsequent phosphorylation dissociates from the ribosome and assembles into the GAIT complex which binds to stem loop-containing GAIT elements in the 3'-UTR of diverse inflammatory mRNAs (such as ceruplasmin) and suppresses their translation. In the GAIT complex interacts with m7G cap-bound eIF4G at or near the eIF3-binding site and blocks the recruitment of the 43S ribosomal complex. Involved in methylation of rRNA. This Mus musculus (Mouse) protein is Large ribosomal subunit protein uL13 (Rpl13a).